Here is a 338-residue protein sequence, read N- to C-terminus: Glycerol-3-phosphate dehydrogenase [NAD(P)+] (338 aa).

Positions 13, 14, and 108 each coordinate NADPH. The sn-glycerol 3-phosphate site is built by Lys-108, Gly-139, and Ser-141. An NADPH-binding site is contributed by Ala-143. The sn-glycerol 3-phosphate site is built by Lys-194, Asp-247, Ser-257, Arg-258, and Asn-259. The active-site Proton acceptor is the Lys-194. Position 258 (Arg-258) interacts with NADPH. 2 residues coordinate NADPH: Val-282 and Glu-284.

It belongs to the NAD-dependent glycerol-3-phosphate dehydrogenase family.

Its subcellular location is the cytoplasm. It catalyses the reaction sn-glycerol 3-phosphate + NAD(+) = dihydroxyacetone phosphate + NADH + H(+). The enzyme catalyses sn-glycerol 3-phosphate + NADP(+) = dihydroxyacetone phosphate + NADPH + H(+). It participates in membrane lipid metabolism; glycerophospholipid metabolism. In terms of biological role, catalyzes the reduction of the glycolytic intermediate dihydroxyacetone phosphate (DHAP) to sn-glycerol 3-phosphate (G3P), the key precursor for phospholipid synthesis. This is Glycerol-3-phosphate dehydrogenase [NAD(P)+] from Streptococcus suis (strain 98HAH33).